A 102-amino-acid chain; its full sequence is NADH-quinone oxidoreductase subunit K (102 aa).

The next 3 membrane-spanning stretches (helical) occupy residues 5 to 25 (LEHY…GIFL), 31 to 51 (IVIL…LVAF), and 66 to 86 (FVLT…VVFF).

Belongs to the complex I subunit 4L family. NDH-1 is composed of 14 different subunits. Subunits NuoA, H, J, K, L, M, N constitute the membrane sector of the complex.

It is found in the cell inner membrane. It carries out the reaction a quinone + NADH + 5 H(+)(in) = a quinol + NAD(+) + 4 H(+)(out). Functionally, NDH-1 shuttles electrons from NADH, via FMN and iron-sulfur (Fe-S) centers, to quinones in the respiratory chain. The immediate electron acceptor for the enzyme in this species is believed to be ubiquinone. Couples the redox reaction to proton translocation (for every two electrons transferred, four hydrogen ions are translocated across the cytoplasmic membrane), and thus conserves the redox energy in a proton gradient. The polypeptide is NADH-quinone oxidoreductase subunit K (Parvibaculum lavamentivorans (strain DS-1 / DSM 13023 / NCIMB 13966)).